The chain runs to 143 residues: MKFLTVAAVFFTAVLAAPGNYPPPPPPTYAPPPPTYTLPPNGNGGGNGNGNGNGNGGGNGNGNGNTNTGGSALCPAGLYSNPQSCATDVLGLADLDCAVPSTTPHDGPNFQSICVANGGKRARCCVLPVLGLGVLCQNPVGTN.

Residues 1–17 (MKFLTVAAVFFTAVLAA) form the signal peptide. The segment covering 20–37 (NYPPPPPPTYAPPPPTYT) has biased composition (pro residues). The tract at residues 20 to 67 (NYPPPPPPTYAPPPPTYTLPPNGNGGGNGNGNGNGNGGGNGNGNGNTN) is disordered. Repeat copies occupy residues 41–42 (NG), 43–44 (NG), 47–48 (NG), 49–50 (NG), 51–52 (NG), 53–54 (NG), 55–56 (NG), 59–60 (NG), 61–62 (NG), and 63–64 (NG). The segment at 41–64 (NGNGGGNGNGNGNGNGGGNGNGNG) is 10 X 2 AA repeats of N-G. The span at 42–63 (GNGGGNGNGNGNGNGGGNGNGN) shows a compositional bias: gly residues. Disulfide bonds link cysteine 74–cysteine 124, cysteine 85–cysteine 97, and cysteine 125–cysteine 136.

It belongs to the cerato-ulmin hydrophobin family. Homotetramer. Further self-assembles to form highly ordered films at water-air interfaces through intermolecular interactions.

The protein resides in the secreted. It is found in the cell wall. Its function is as follows. Aerial growth, conidiation, and dispersal of filamentous fungi in the environment rely upon a capability of their secreting small amphipathic proteins called hydrophobins (HPBs) with low sequence identity. Class I can self-assemble into an outermost layer of rodlet bundles on aerial cell surfaces, conferring cellular hydrophobicity that supports fungal growth, development and dispersal; whereas Class II form highly ordered films at water-air interfaces through intermolecular interactions but contribute nothing to the rodlet structure. Qid3 is a class II hydrophobin that might acts as a chitinase inhibitor at the cell surface that blocks the degradation of the chitin rings localized in the budding region of dividing cells. This is Class II hydrophobin qid3 from Trichoderma harzianum (Hypocrea lixii).